We begin with the raw amino-acid sequence, 176 residues long: Calcium and integrin-binding family member 2 (176 aa).

EF-hand domains are found at residues 55 to 90, 92 to 127, and 133 to 168; these read RENP…LCES, PRDL…LTKS, and EVVL…APDF. 9 residues coordinate Ca(2+): D105, N107, D109, D116, D146, D148, D150, K152, and D157.

In terms of assembly, monomer. Homodimer. Interacts with WHRN and MYO7A. Interacts with ITGA2B (via C-terminus cytoplasmic tail region); the interactions are stabilized/increased in a calcium and magnesium-dependent manner. Interacts with ITGA7 (via C-terminus cytoplasmic tail region); the interactions are stabilized/increased in a calcium and magnesium-dependent manner. Interacts with TMC1. Interacts with TMC2. As to expression, expressed in liver, heart, kidney, brain, spleen, stomach, ovary, testis and muscle.

It localises to the cytoplasm. It is found in the cell projection. The protein localises to the stereocilium. Its subcellular location is the photoreceptor inner segment. The protein resides in the cilium. It localises to the photoreceptor outer segment. It is found in the cell membrane. The protein localises to the sarcolemma. Its function is as follows. Calcium- and integrin-binding protein that plays a role in intracellular calcium homeostasis. Acts as an auxiliary subunit of the sensory mechanoelectrical transduction (MET) channel in hair cells. Essential for mechanoelectrical transduction (MET) currents in auditory hair cells and thereby required for hearing. Regulates the function of hair cell mechanotransduction by controlling the distribution of transmembrane channel-like proteins TMC1 and TMC2, and by regulating the function of the MET channels in hair cells. Required for the maintenance of auditory hair cell stereocilia bundle morphology and function and for hair-cell survival in the cochlea. Critical for proper photoreceptor cell maintenance and function. Plays a role in intracellular calcium homeostasis by decreasing ATP-induced calcium release. In Ovis aries (Sheep), this protein is Calcium and integrin-binding family member 2 (CIB2).